The primary structure comprises 598 residues: DNA primase (598 aa).

Residues 38-62 (CPFHDEKTPSFTVSEDKQICHCFGC) form a CHC2-type zinc finger. Residues 260-341 (DEIILLEGFM…NVYVVQLPSG (82 aa)) form the Toprim domain. Mg(2+) is bound by residues glutamate 266, aspartate 310, and aspartate 312.

Belongs to the DnaG primase family. Monomer. Interacts with DnaB. Zn(2+) is required as a cofactor. It depends on Mg(2+) as a cofactor.

The enzyme catalyses ssDNA + n NTP = ssDNA/pppN(pN)n-1 hybrid + (n-1) diphosphate.. Its function is as follows. RNA polymerase that catalyzes the synthesis of short RNA molecules used as primers for DNA polymerase during DNA replication. This Staphylococcus epidermidis (strain ATCC 12228 / FDA PCI 1200) protein is DNA primase.